The following is a 199-amino-acid chain: dTTP/UTP pyrophosphatase (199 aa).

The active-site Proton acceptor is D76.

Belongs to the Maf family. YhdE subfamily. A divalent metal cation serves as cofactor.

The protein resides in the cytoplasm. The enzyme catalyses dTTP + H2O = dTMP + diphosphate + H(+). It catalyses the reaction UTP + H2O = UMP + diphosphate + H(+). In terms of biological role, nucleoside triphosphate pyrophosphatase that hydrolyzes dTTP and UTP. May have a dual role in cell division arrest and in preventing the incorporation of modified nucleotides into cellular nucleic acids. The sequence is that of dTTP/UTP pyrophosphatase from Chlorobaculum parvum (strain DSM 263 / NCIMB 8327) (Chlorobium vibrioforme subsp. thiosulfatophilum).